A 55-amino-acid chain; its full sequence is uncharacterized protein (55 aa).

Residues 1–30 (MDKPTVETSAAPVETLVLTEPPAETQAEDS) are disordered.

This is an uncharacterized protein from Frog virus 3 (isolate Goorha) (FV-3).